We begin with the raw amino-acid sequence, 253 residues long: MTRVILFPAIDLKEGRCVRLVQGDMAQAIVFSDDPAAQAASFAEQGFSWLHVVDLDGAFAGAPMNAAAVDAILAAVTIPVQLGGGIREMRTVEGWLAKGVSRVIIGTAAVRDPAFVREAARLFPGRIAVGIDAKDGRVAVEGWAKTSTVTAEELGRRFEDAGVAALIYTDIARDGVLKGLNIPMTLALAQAVSIPVIASGGLASIEDVHRILEPDCALLAGAITGRALYDGRIDPREALAAIRRAEEARRSGS.

The active-site Proton acceptor is the Asp-11. Asp-132 acts as the Proton donor in catalysis.

The protein belongs to the HisA/HisF family.

It localises to the cytoplasm. It carries out the reaction 1-(5-phospho-beta-D-ribosyl)-5-[(5-phospho-beta-D-ribosylamino)methylideneamino]imidazole-4-carboxamide = 5-[(5-phospho-1-deoxy-D-ribulos-1-ylimino)methylamino]-1-(5-phospho-beta-D-ribosyl)imidazole-4-carboxamide. It functions in the pathway amino-acid biosynthesis; L-histidine biosynthesis; L-histidine from 5-phospho-alpha-D-ribose 1-diphosphate: step 4/9. The polypeptide is 1-(5-phosphoribosyl)-5-[(5-phosphoribosylamino)methylideneamino] imidazole-4-carboxamide isomerase (Methylobacterium nodulans (strain LMG 21967 / CNCM I-2342 / ORS 2060)).